The chain runs to 331 residues: UPF0324 membrane protein SAR0338 (331 aa).

11 consecutive transmembrane segments (helical) span residues phenylalanine 9–alanine 26, isoleucine 31–tyrosine 48, leucine 69–glycine 88, leucine 93–leucine 115, alanine 122–phenylalanine 144, serine 154–phenylalanine 176, tyrosine 183–glycine 202, leucine 217–methionine 234, isoleucine 247–proline 269, leucine 273–valine 295, and leucine 308–tyrosine 330.

It belongs to the UPF0324 family.

The protein resides in the cell membrane. This chain is UPF0324 membrane protein SAR0338, found in Staphylococcus aureus (strain MRSA252).